The sequence spans 180 residues: Nucleoside triphosphate/diphosphate phosphatase (180 aa).

The active-site Proton donor is the arginine 26. Mg(2+) is bound by residues asparagine 90, aspartate 106, aspartate 108, aspartate 110, aspartate 123, and glutamate 126.

This sequence belongs to the Ntdp family. Mg(2+) is required as a cofactor.

The catalysed reaction is a ribonucleoside 5'-triphosphate + H2O = a ribonucleoside 5'-diphosphate + phosphate + H(+). The enzyme catalyses a ribonucleoside 5'-diphosphate + H2O = a ribonucleoside 5'-phosphate + phosphate + H(+). In terms of biological role, has nucleoside phosphatase activity towards nucleoside triphosphates and nucleoside diphosphates. This chain is Nucleoside triphosphate/diphosphate phosphatase, found in Staphylococcus aureus (strain MRSA252).